The following is a 253-amino-acid chain: LexA repressor (253 aa).

The tract at residues 1–34 (MAIEKKPAGARGSRGSRTVKTLPNGKPDPASLSD) is disordered. Positions 56 to 76 (IREIGDAAGLQSTSSVAYQLK) form a DNA-binding region, H-T-H motif. A compositionally biased stretch (basic and acidic residues) spans 82 to 106 (GFLRRDPNKPRAVDVRHLPETESRS). The disordered stretch occupies residues 82–127 (GFLRRDPNKPRAVDVRHLPETESRSSKAATQAKSKAPQAGAHDPEL). The segment covering 107-120 (SKAATQAKSKAPQA) has biased composition (low complexity). Residues Ser-177 and Lys-214 each act as for autocatalytic cleavage activity in the active site.

Belongs to the peptidase S24 family. As to quaternary structure, homodimer.

The catalysed reaction is Hydrolysis of Ala-|-Gly bond in repressor LexA.. Its function is as follows. Represses a number of genes involved in the response to DNA damage (SOS response), including recA and lexA. In the presence of single-stranded DNA, RecA interacts with LexA causing an autocatalytic cleavage which disrupts the DNA-binding part of LexA, leading to derepression of the SOS regulon and eventually DNA repair. This chain is LexA repressor, found in Corynebacterium glutamicum (strain R).